The primary structure comprises 867 residues: MGKIFSWLVVLLSLISLVPVPSESAVLSVDLGSEWVKVAVVNLKRGQSPISVAINEMSKRKSPALVAFQSGDRLLGEEAAGITARYPNKVYSQLRDMVGKPFKHVKDFIDSVYLPFDIVEDSRGAVGIKIDDGSTVYSVEELLAMILGYASNLAEFHAKIPVKDMVVSVPPYFGQAERRGLIQASQLAGVNVLSLVNEHSGAALQYGIDKDFANGSRHVIFYDMGSSSTYAALVYYSAYSEKEYGKTVSVNQFQVKDVRWDLGLGGQSMEMRLVEHFADEFNKQLGNGVDVRKFPKAMAKLKKQVKRTKEILSANTAAPISVESLHDDRDFRSTITREKFEELCKDLWERSLTPLKDVLKHSGLKIDDISAVELIGGATRVPKLQSTIQEFIGKQQLDKHLDADEAIVLGSALHAANLSDGIKLKRRLGIVDGSPYGFLVELEGPNVKKDESTKQQLVPRMKKLPSKMFRSFVLDKDFDVSLAYESEGILPPGTTSPVFAQYSVSGLADASEKYSSRNLSAPIKANLHFSLSRSGILSLDRGDAVIEITEWVDVPKKNVTIDSNTTTSTGNATDENSQENKEDLQTDAENSTASNTTAEEPAVASLGTEKKLKKRTFRIPLKVVEKTVGPGAPFSKESLAEAKIKLEALDKKDRERRRTAELKNNLESYIYATKEKLETPEFEKISTQEERKAFVEKLDEVQDWLYMDGEDANATEFEKRLDSLKAIGSPISFRSEELTARPVAIEYARKYLTELKEIIKEWETNKTWLPKEKIDEVSKEAEKVKSWLDKNVAEQEKTSLWSKPVFTSTEVYAKVFTLQDKVTKVNKIPKPKPKIEKVTKTENTTKEEEQSKSSDEAAKEEESHDEL.

Residues 1–24 form the signal peptide; the sequence is MGKIFSWLVVLLSLISLVPVPSES. Polar residues-rich tracts occupy residues 560–575 and 587–598; these read TIDS…ATDE and DAENSTASNTTA. 2 disordered regions span residues 560-607 and 829-867; these read TIDS…ASLG and PKPK…HDEL. Over residues 833–867 the composition is skewed to basic and acidic residues; sequence PKIEKVTKTENTTKEEEQSKSSDEAAKEEESHDEL. The Prevents secretion from ER signature appears at 865-867; the sequence is DEL.

This sequence belongs to the heat shock protein 70 (TC 1.A.33) family. HSP110/SSE subfamily.

The protein localises to the endoplasmic reticulum lumen. This chain is Heat shock 70 kDa protein 17 (HSP70-17), found in Arabidopsis thaliana (Mouse-ear cress).